We begin with the raw amino-acid sequence, 640 residues long: 1-deoxy-D-xylulose-5-phosphate synthase (640 aa).

Thiamine diphosphate contacts are provided by residues histidine 75 and 117–119; that span reads GHA. Position 146 (aspartate 146) interacts with Mg(2+). Thiamine diphosphate contacts are provided by residues 147-148, asparagine 175, and glutamate 370; that span reads AA. Position 175 (asparagine 175) interacts with Mg(2+).

The protein belongs to the transketolase family. DXPS subfamily. In terms of assembly, homodimer. The cofactor is Mg(2+). Thiamine diphosphate is required as a cofactor.

It carries out the reaction D-glyceraldehyde 3-phosphate + pyruvate + H(+) = 1-deoxy-D-xylulose 5-phosphate + CO2. It functions in the pathway metabolic intermediate biosynthesis; 1-deoxy-D-xylulose 5-phosphate biosynthesis; 1-deoxy-D-xylulose 5-phosphate from D-glyceraldehyde 3-phosphate and pyruvate: step 1/1. Its function is as follows. Catalyzes the acyloin condensation reaction between C atoms 2 and 3 of pyruvate and glyceraldehyde 3-phosphate to yield 1-deoxy-D-xylulose-5-phosphate (DXP). In Chlamydia trachomatis serovar A (strain ATCC VR-571B / DSM 19440 / HAR-13), this protein is 1-deoxy-D-xylulose-5-phosphate synthase.